The chain runs to 105 residues: Large ribosomal subunit protein uL24 (105 aa).

It belongs to the universal ribosomal protein uL24 family. As to quaternary structure, part of the 50S ribosomal subunit.

Functionally, one of two assembly initiator proteins, it binds directly to the 5'-end of the 23S rRNA, where it nucleates assembly of the 50S subunit. One of the proteins that surrounds the polypeptide exit tunnel on the outside of the subunit. The sequence is that of Large ribosomal subunit protein uL24 from Francisella tularensis subsp. tularensis (strain FSC 198).